Consider the following 230-residue polypeptide: 3,4-dihydroxy-2-butanone 4-phosphate synthase (230 aa).

D-ribulose 5-phosphate is bound by residues 42–43 (RE), D47, 155–159 (RRGHT), and E179. Position 43 (E43) interacts with Mg(2+). H158 is a Mg(2+) binding site.

This sequence belongs to the DHBP synthase family. Homodimer. Requires Mg(2+) as cofactor. It depends on Mn(2+) as a cofactor.

It carries out the reaction D-ribulose 5-phosphate = (2S)-2-hydroxy-3-oxobutyl phosphate + formate + H(+). It functions in the pathway cofactor biosynthesis; riboflavin biosynthesis; 2-hydroxy-3-oxobutyl phosphate from D-ribulose 5-phosphate: step 1/1. In terms of biological role, catalyzes the conversion of D-ribulose 5-phosphate to formate and 3,4-dihydroxy-2-butanone 4-phosphate. In Bordetella bronchiseptica (strain ATCC BAA-588 / NCTC 13252 / RB50) (Alcaligenes bronchisepticus), this protein is 3,4-dihydroxy-2-butanone 4-phosphate synthase.